Consider the following 262-residue polypeptide: tRNA pseudouridine synthase A (262 aa).

Residue Asp51 is the Nucleophile of the active site. Tyr109 is a binding site for substrate.

It belongs to the tRNA pseudouridine synthase TruA family. As to quaternary structure, homodimer.

The catalysed reaction is uridine(38/39/40) in tRNA = pseudouridine(38/39/40) in tRNA. Formation of pseudouridine at positions 38, 39 and 40 in the anticodon stem and loop of transfer RNAs. The polypeptide is tRNA pseudouridine synthase A (Legionella pneumophila (strain Lens)).